The sequence spans 492 residues: Fascin-2 (492 aa).

Belongs to the fascin family. Localized specifically in the outer and inner segments of the photoreceptor cells in the retina.

The protein localises to the cytoplasm. It localises to the cytoskeleton. The protein resides in the cell projection. It is found in the stereocilium. Acts as an actin bundling protein. May play a pivotal role in photoreceptor cell-specific events, such as disk morphogenesis. This is Fascin-2 (FSCN2) from Homo sapiens (Human).